The sequence spans 165 residues: Nucleotide-binding protein SYNW1816 (165 aa).

The protein belongs to the YajQ family.

Functionally, nucleotide-binding protein. The polypeptide is Nucleotide-binding protein SYNW1816 (Parasynechococcus marenigrum (strain WH8102)).